Reading from the N-terminus, the 960-residue chain is Gamma-aminobutyric acid type B receptor subunit 1 (960 aa).

Residues 1 to 19 form the signal peptide; it reads MLLLLLVPLFLRPLGAGGA. Residues 20-590 are Extracellular-facing; it reads QTPNVTSEGC…KTFRFLSQKL (571 aa). Asn23 and Asn83 each carry an N-linked (GlcNAc...) asparagine glycan. Sushi domains are found at residues 29–95 and 97–158; these read CQII…PSRC and RICS…HCQV. 3 disulfides stabilise this stretch: Cys99–Cys144, Cys130–Cys156, and Cys219–Cys245. Residues Ser246, Ser269, His286, and Tyr366 each contribute to the 4-aminobutanoate site. An intrachain disulfide couples Cys375 to Cys409. N-linked (GlcNAc...) asparagine glycosylation is found at Asn408 and Asn439. Glu465 contributes to the 4-aminobutanoate binding site. N-linked (GlcNAc...) asparagine glycosylation is found at Asn481, Asn501, and Asn513. The chain crosses the membrane as a helical span at residues 591–611; the sequence is FISVSVLSSLGIVLAVVCLSF. The Cytoplasmic segment spans residues 612 to 630; it reads NIYNSHVRYIQNSQPNLNN. Residues 631 to 651 form a helical membrane-spanning segment; it reads LTAVGCSLALAAVFPLGLDGY. Topologically, residues 652–666 are extracellular; it reads HIGRSQFPFVCQARL. The helical transmembrane segment at 667–687 threads the bilayer; it reads WLLGLGFSLGYGSMFTKIWWV. Residues 688-709 lie on the Cytoplasmic side of the membrane; the sequence is HTVFTKKEEKKEWRKTLEPWKL. Residues 710–730 traverse the membrane as a helical segment; the sequence is YATVGLLVGMDILTLAIWQIV. The Extracellular portion of the chain corresponds to 731-767; that stretch reads DPLHRTIETFAKEEPKEDIDVSILPQLEHCSSKKMNT. A helical transmembrane segment spans residues 768 to 788; it reads WLGIFYGYKGLLLLLGIFLAY. The Cytoplasmic portion of the chain corresponds to 789–803; it reads ETKSVSTEKINDHRA. Residues 804–824 traverse the membrane as a helical segment; it reads VGMAIYNVAVLCLITAPVTMI. At 825–832 the chain is on the extracellular side; that stretch reads LSSQQDAA. A helical membrane pass occupies residues 833-853; it reads FAFASLAIVFSSYITLVVLFV. Topologically, residues 854–960 are cytoplasmic; that stretch reads PKMRRLITRG…DGSRVHLLYK (107 aa). Disordered regions lie at residues 866 to 891 and 908 to 960; these read QSEAQDTMKTGSSTNNNEEEKSRLLE and VSEL…LLYK. A compositionally biased stretch (polar residues) spans 867 to 879; the sequence is SEAQDTMKTGSST. Residues 868 to 924 adopt a coiled-coil conformation; it reads EAQDTMKTGSSTNNNEEEKSRLLEKENRELEKIIAEKEERVSELRHQLQSRQQIRSR. Thr872 carries the post-translational modification Phosphothreonine. Positions 887 to 915 are interaction with ATF4; the sequence is SRLLEKENRELEKIIAEKEERVSELRHQL. Thr929 carries the post-translational modification Phosphothreonine.

The protein belongs to the G-protein coupled receptor 3 family. GABA-B receptor subfamily. As to quaternary structure, heterodimer of GABBR1 and GABBR2. Homodimers may form, but are inactive. Interacts (via C-terminus) with ATF4 (via leucine zipper domain). Interacts with JAKMIP1. Interacts with KCTD8, KCTD12, KCTD12B and KCTD16; this interaction determines the pharmacology and kinetics of the receptor response, the KCTD proteins markedly accelerating the GABA-B response, although to different extents. Expressed in neuronal tissue including cortex, cerebellum and spinal cord. Not detected in non-neuronal tissues including heart, liver, spleen and kidney.

The protein resides in the cell membrane. It is found in the postsynaptic cell membrane. It localises to the cell projection. Its subcellular location is the dendrite. Component of a heterodimeric G-protein coupled receptor for GABA, formed by GABBR1 and GABBR2. Within the heterodimeric GABA receptor, only GABBR1 seems to bind agonists, while GABBR2 mediates coupling to G proteins. Ligand binding causes a conformation change that triggers signaling via guanine nucleotide-binding proteins (G proteins) and modulates the activity of down-stream effectors, such as adenylate cyclase. Signaling inhibits adenylate cyclase, stimulates phospholipase A2, activates potassium channels, inactivates voltage-dependent calcium-channels and modulates inositol phospholipid hydrolysis. Calcium is required for high affinity binding to GABA. Plays a critical role in the fine-tuning of inhibitory synaptic transmission. Pre-synaptic GABA receptor inhibits neurotransmitter release by down-regulating high-voltage activated calcium channels, whereas postsynaptic GABA receptor decreases neuronal excitability by activating a prominent inwardly rectifying potassium (Kir) conductance that underlies the late inhibitory postsynaptic potentials. Not only implicated in synaptic inhibition but also in hippocampal long-term potentiation, slow wave sleep, muscle relaxation and antinociception. This chain is Gamma-aminobutyric acid type B receptor subunit 1 (Gabbr1), found in Mus musculus (Mouse).